The sequence spans 206 residues: Large ribosomal subunit protein eL13y (206 aa).

The disordered stretch occupies residues 182–206 (LERTNKRHAGARAKRAADAEKEEKK). The span at 186–195 (NKRHAGARAK) shows a compositional bias: basic residues. Residues 196-206 (RAADAEKEEKK) are compositionally biased toward basic and acidic residues.

This sequence belongs to the eukaryotic ribosomal protein eL13 family.

The chain is Large ribosomal subunit protein eL13y from Brassica napus (Rape).